The primary structure comprises 944 residues: Isoleucine--tRNA ligase (944 aa).

The 'HIGH' region signature appears at 58-68; it reads PYANGDIHIGH. Glu-568 provides a ligand contact to L-isoleucyl-5'-AMP. Positions 609-613 match the 'KMSKS' region motif; sequence KMSKS. Lys-612 contributes to the ATP binding site. Zn(2+)-binding residues include Cys-907, Cys-910, Cys-927, and Cys-930.

The protein belongs to the class-I aminoacyl-tRNA synthetase family. IleS type 1 subfamily. As to quaternary structure, monomer. Zn(2+) is required as a cofactor.

It is found in the cytoplasm. It carries out the reaction tRNA(Ile) + L-isoleucine + ATP = L-isoleucyl-tRNA(Ile) + AMP + diphosphate. Functionally, catalyzes the attachment of isoleucine to tRNA(Ile). As IleRS can inadvertently accommodate and process structurally similar amino acids such as valine, to avoid such errors it has two additional distinct tRNA(Ile)-dependent editing activities. One activity is designated as 'pretransfer' editing and involves the hydrolysis of activated Val-AMP. The other activity is designated 'posttransfer' editing and involves deacylation of mischarged Val-tRNA(Ile). This is Isoleucine--tRNA ligase from Psychromonas ingrahamii (strain DSM 17664 / CCUG 51855 / 37).